The primary structure comprises 243 residues: Homeobox protein nob-1 (243 aa).

Over residues 1–12 (MISVMQQMINND) the composition is skewed to polar residues. 2 disordered regions span residues 1 to 23 (MISVMQQMINNDSPEDSKESITS) and 40 to 67 (SIQGESRSERESETGSSPQLAPSSTGMV). A DNA-binding region (homeobox) is located at residues 162–221 (GKKKRQPYKKDQISRLEYEYSVNQYLTNKRRSELSAQLMLDEKQVKVWFQNRRMKDKKLR).

It belongs to the abd-b homeobox family. As to quaternary structure, interacts with nuclear receptor nhr-25. Interacts with geminin homolog gmn-1. Interacts with homeodomain protein ceh-20.

The protein localises to the nucleus. Functionally, transcription factor, involved in posterior embryonic patterning, morphogenetic movements of the posterior hypodermis, and cell fate specification. Binds to the 5'-TAGT-3' motif in regulatory elements of genes, including Meis protein psa-3 and microRNA mir-57. Involved in a negative regulatory loop with mir-57 to specify posterior cell identities. Required for asymmetric division of the T hypodermal cell, acting via the regulation of asymmetric expression of psa-3 in cooperation with ceh-20 and the Wnt-MAPK pathway. Involved in the regulation of the onset of non-apoptotic cell death in the linker cell, acting together with the Wnt signaling pathway. Involved in promoting embryogenesis, in concert with orphan nuclear receptor nhr-25. May regulate expression of transcription factor dmd-3. This chain is Homeobox protein nob-1, found in Caenorhabditis elegans.